We begin with the raw amino-acid sequence, 204 residues long: Holliday junction branch migration complex subunit RuvA (204 aa).

The tract at residues 1-64 (MIGHLTGRLV…EDAHLLFGFS (64 aa)) is domain I. The domain II stretch occupies residues 65–143 (QKTDRTLFRE…GIQQEDFFIE (79 aa)). The interval 144–155 (SQHLKQPEHALN) is flexible linker. Residues 156–204 (EQDIPASEAISALIALGYKAAEAEKLVKKISKPALSSEQLIREALKAAL) are domain III.

This sequence belongs to the RuvA family. Homotetramer. Forms an RuvA(8)-RuvB(12)-Holliday junction (HJ) complex. HJ DNA is sandwiched between 2 RuvA tetramers; dsDNA enters through RuvA and exits via RuvB. An RuvB hexamer assembles on each DNA strand where it exits the tetramer. Each RuvB hexamer is contacted by two RuvA subunits (via domain III) on 2 adjacent RuvB subunits; this complex drives branch migration. In the full resolvosome a probable DNA-RuvA(4)-RuvB(12)-RuvC(2) complex forms which resolves the HJ.

It is found in the cytoplasm. Functionally, the RuvA-RuvB-RuvC complex processes Holliday junction (HJ) DNA during genetic recombination and DNA repair, while the RuvA-RuvB complex plays an important role in the rescue of blocked DNA replication forks via replication fork reversal (RFR). RuvA specifically binds to HJ cruciform DNA, conferring on it an open structure. The RuvB hexamer acts as an ATP-dependent pump, pulling dsDNA into and through the RuvAB complex. HJ branch migration allows RuvC to scan DNA until it finds its consensus sequence, where it cleaves and resolves the cruciform DNA. This chain is Holliday junction branch migration complex subunit RuvA, found in Pasteurella multocida (strain Pm70).